The sequence spans 262 residues: Small ribosomal subunit protein eS4B (262 aa).

The 64-residue stretch at 42–105 folds into the S4 RNA-binding domain; the sequence is LPLIVFLRNR…GEHFRLVYDI (64 aa). At S223 the chain carries Phosphoserine.

This sequence belongs to the eukaryotic ribosomal protein eS4 family. In terms of assembly, component of the small ribosomal subunit (SSU). Mature yeast ribosomes consist of a small (40S) and a large (60S) subunit. The 40S small subunit contains 1 molecule of ribosomal RNA (18S rRNA) and at least 33 different proteins. The large 60S subunit contains 3 rRNA molecules (25S, 5.8S and 5S rRNA) and at least 46 different proteins.

The protein resides in the cytoplasm. It localises to the nucleus. The protein localises to the nucleolus. In terms of biological role, component of the ribosome, a large ribonucleoprotein complex responsible for the synthesis of proteins in the cell. The small ribosomal subunit (SSU) binds messenger RNAs (mRNAs) and translates the encoded message by selecting cognate aminoacyl-transfer RNA (tRNA) molecules. The large subunit (LSU) contains the ribosomal catalytic site termed the peptidyl transferase center (PTC), which catalyzes the formation of peptide bonds, thereby polymerizing the amino acids delivered by tRNAs into a polypeptide chain. The nascent polypeptides leave the ribosome through a tunnel in the LSU and interact with protein factors that function in enzymatic processing, targeting, and the membrane insertion of nascent chains at the exit of the ribosomal tunnel. The polypeptide is Small ribosomal subunit protein eS4B (rps402) (Schizosaccharomyces pombe (strain 972 / ATCC 24843) (Fission yeast)).